The following is a 794-amino-acid chain: Potassium transporter 2 (794 aa).

Residues Met-1–Ser-21 are Cytoplasmic-facing. The chain crosses the membrane as a helical span at residues Val-22–Leu-42. The Extracellular segment spans residues Tyr-43–Gly-64. A helical transmembrane segment spans residues Val-65–Val-85. At Leu-86–Leu-153 the chain is on the cytoplasmic side. The chain crosses the membrane as a helical span at residues Leu-154 to Ile-174. At Ser-175–Gln-193 the chain is on the extracellular side. The chain crosses the membrane as a helical span at residues Tyr-194–Gly-214. The Cytoplasmic portion of the chain corresponds to Thr-215 to Arg-217. A helical membrane pass occupies residues Val-218–Leu-238. Residues Tyr-239 to Arg-265 lie on the Extracellular side of the membrane. Residues Val-266–Phe-286 traverse the membrane as a helical segment. The Cytoplasmic segment spans residues Ala-287 to Tyr-294. A helical transmembrane segment spans residues Ala-295 to Gly-315. Residues Gln-316–Cys-339 are Extracellular-facing. The chain crosses the membrane as a helical span at residues Leu-340–Ile-360. Topologically, residues Ser-361 to Gln-391 are cytoplasmic. Residues Ile-392–Phe-412 form a helical membrane-spanning segment. The Extracellular segment spans residues Arg-413–His-417. 2 helical membrane-spanning segments follow: residues Leu-418–Ser-438 and Leu-439–Phe-459. The Extracellular segment spans residues Gly-460–Glu-476. Residues Gly-477–Tyr-497 form a helical membrane-spanning segment. Topologically, residues Thr-498–Val-794 are cytoplasmic.

The protein belongs to the HAK/KUP transporter (TC 2.A.72.3) family. In terms of tissue distribution, slightly detected in roots, stems, leaves and flowers of mature plants and in potassium-starved plants.

The protein resides in the cell membrane. Its function is as follows. Low-affinity potassium transporter. Could mediate the potassium-dependent cell expansion in growing tissues. In Arabidopsis thaliana (Mouse-ear cress), this protein is Potassium transporter 2 (POT2).